Here is a 216-residue protein sequence, read N- to C-terminus: Ribosomal RNA small subunit methyltransferase G (216 aa).

Residues Gly-82, Leu-87, Ala-135–Glu-136, and Arg-148 contribute to the S-adenosyl-L-methionine site.

This sequence belongs to the methyltransferase superfamily. RNA methyltransferase RsmG family.

The protein resides in the cytoplasm. The enzyme catalyses guanosine(527) in 16S rRNA + S-adenosyl-L-methionine = N(7)-methylguanosine(527) in 16S rRNA + S-adenosyl-L-homocysteine. Functionally, specifically methylates the N7 position of guanine in position 527 of 16S rRNA. The sequence is that of Ribosomal RNA small subunit methyltransferase G from Caulobacter vibrioides (strain ATCC 19089 / CIP 103742 / CB 15) (Caulobacter crescentus).